The following is a 765-amino-acid chain: Cyanobacterial phytochrome A (765 aa).

Residues 20–510 (IHLSGQIQPH…RKAIVNIVLR (491 aa)) are chromophore binding domain. Positions 152–320 (NLRDFCQIIV…VIFAEISARE (169 aa)) constitute a GAF domain. An a tetrapyrrole-binding site is contributed by C259. The Histidine kinase domain maps to 535 to 748 (VASHDLQEPL…TFYFTIPVGG (214 aa)). H538 is modified (phosphohistidine; by autocatalysis).

This sequence in the N-terminal section; belongs to the phytochrome family. In terms of processing, contains one covalently linked tetrapyrrole chromophore.

The catalysed reaction is ATP + protein L-histidine = ADP + protein N-phospho-L-histidine.. Functionally, photoreceptor which exists in two forms that are reversibly interconvertible by light: the R form that absorbs maximally in the red region of the spectrum and the FR form that absorbs maximally in the far-red region. This is Cyanobacterial phytochrome A (aphA) from Nostoc sp. (strain PCC 7120 / SAG 25.82 / UTEX 2576).